The chain runs to 504 residues: 6,7,8-trihydroxycoumarin synthase (504 aa).

A helical transmembrane segment spans residues 1–21; that stretch reads MEPVFLFLILAFPIASVYLLF. A substrate specificity region spans residues 363-368; sequence PAPVLV. Cys444 provides a ligand contact to heme.

Belongs to the cytochrome P450 family. The cofactor is heme.

It localises to the microsome membrane. Its pathway is secondary metabolite biosynthesis. In terms of biological role, involved in the biosynthesis of coumarins and furanocoumarins (FCs), natural products required for defense responses against attacks by predators with potential medical and agroindustrial usages such as anticoagulant, rodenticide and artificial vanilla substitutes. Able to catalyze the hydroxylation of esculetin to produce 6,7,8-trihydroxycoumarin. This chain is 6,7,8-trihydroxycoumarin synthase, found in Pastinaca sativa (Wild parsnip).